The sequence spans 32 residues: Dermatoxin-J3 (32 aa).

Gln32 carries the post-translational modification Glutamine amide.

Expressed by the skin glands.

It is found in the secreted. In terms of biological role, antimicrobial peptide. The sequence is that of Dermatoxin-J3 from Phasmahyla jandaia (Jandaia leaf frog).